Here is a 660-residue protein sequence, read N- to C-terminus: DNA mismatch repair protein MutL (660 aa).

It belongs to the DNA mismatch repair MutL/HexB family.

Its function is as follows. This protein is involved in the repair of mismatches in DNA. It is required for dam-dependent methyl-directed DNA mismatch repair. May act as a 'molecular matchmaker', a protein that promotes the formation of a stable complex between two or more DNA-binding proteins in an ATP-dependent manner without itself being part of a final effector complex. The polypeptide is DNA mismatch repair protein MutL (Solibacter usitatus (strain Ellin6076)).